We begin with the raw amino-acid sequence, 184 residues long: Interferon alpha-1 (184 aa).

The signal sequence occupies residues 1 to 23; sequence MALPVSLLMALVVLSCHSICSLG. Cystine bridges form between C24/C122 and C52/C162.

Belongs to the alpha/beta interferon family. As to quaternary structure, interacts with CR2.

It localises to the secreted. Its function is as follows. Produced by macrophages, IFN-alpha have antiviral activities. Interferon stimulates the production of two enzymes: a protein kinase and an oligoadenylate synthetase. This Equus caballus (Horse) protein is Interferon alpha-1.